A 224-amino-acid polypeptide reads, in one-letter code: Cysteine S-methyltransferase NleE (224 aa).

An interaction with host proteins TAB2, TAB3 and ZRANB3 region spans residues 49–52; that stretch reads GITR. The S-adenosyl-L-methionine site is built by Ala-92, Ser-98, Arg-107, Gln-111, Tyr-204, and Glu-208.

Belongs to the NleE/OspZ family. As to quaternary structure, monomer.

It is found in the secreted. Its subcellular location is the host nucleus. It catalyses the reaction L-cysteinyl-[protein] + S-adenosyl-L-methionine = S-methyl-L-cysteinyl-[protein] + S-adenosyl-L-homocysteine + H(+). Its function is as follows. Cysteine methyltransferase effector that inhibits host cell NF-kappa-B activation by preventing nuclear translocation of host protein RELA/p65. Acts by mediating cysteine methylation of host proteins TAB2 and TAB3: methylation of a conserved cysteine residue of the RanBP2-type zinc finger (NZF) of TAB2 and TAB3 disrupts zinc-binding, thereby inactivating the ubiquitin chain-binding activity of TAB2 and TAB3, leading to NF-kappa-B inactivation. Also mediates cysteine methylation of host protein ZRANB3, inactivating its ability to bind ubiquitin chains. This chain is Cysteine S-methyltransferase NleE, found in Escherichia coli O127:H6 (strain E2348/69 / EPEC).